Consider the following 95-residue polypeptide: Co-chaperonin GroES (95 aa).

It belongs to the GroES chaperonin family. As to quaternary structure, heptamer of 7 subunits arranged in a ring. Interacts with the chaperonin GroEL.

It is found in the cytoplasm. Together with the chaperonin GroEL, plays an essential role in assisting protein folding. The GroEL-GroES system forms a nano-cage that allows encapsulation of the non-native substrate proteins and provides a physical environment optimized to promote and accelerate protein folding. GroES binds to the apical surface of the GroEL ring, thereby capping the opening of the GroEL channel. This Rickettsia akari (strain Hartford) protein is Co-chaperonin GroES.